The following is an 89-amino-acid chain: Class II hydrophobin 2 (89 aa).

The N-terminal stretch at 1–15 (MKLYIAAALLTLGLA) is a signal peptide. Disulfide bonds link Cys-34-Cys-74, Cys-45-Cys-66, Cys-46-Cys-58, and Cys-75-Cys-86.

It belongs to the cerato-ulmin hydrophobin family. As to quaternary structure, homodimer. Homodimers further self-assemble to form highly ordered films at water-air interfaces through intermolecular interactions.

The protein resides in the secreted. It localises to the cell wall. In terms of biological role, aerial growth, conidiation, and dispersal of filamentous fungi in the environment rely upon a capability of their secreting small amphipathic proteins called hydrophobins (HPBs) with low sequence identity. Class I can self-assemble into an outermost layer of rodlet bundles on aerial cell surfaces, conferring cellular hydrophobicity that supports fungal growth, development and dispersal; whereas Class II form highly ordered films at water-air interfaces through intermolecular interactions but contribute nothing to the rodlet structure. The sequence is that of Class II hydrophobin 2 from Trichoderma asperellum (strain ATCC 204424 / CBS 433.97 / NBRC 101777).